We begin with the raw amino-acid sequence, 220 residues long: Large ribosomal subunit protein uL3 (220 aa).

Residues 61 to 81 (KGSKSNKYANKPAEGHAKKAD) form a disordered region.

This sequence belongs to the universal ribosomal protein uL3 family. As to quaternary structure, part of the 50S ribosomal subunit. Forms a cluster with proteins L14 and L19.

Functionally, one of the primary rRNA binding proteins, it binds directly near the 3'-end of the 23S rRNA, where it nucleates assembly of the 50S subunit. The protein is Large ribosomal subunit protein uL3 of Staphylococcus epidermidis (strain ATCC 12228 / FDA PCI 1200).